Reading from the N-terminus, the 419-residue chain is Cysteine desulfurase (419 aa).

Residues 69 to 70, N157, Q185, and 205 to 207 each bind pyridoxal 5'-phosphate; these read AT and SAH. At K208 the chain carries N6-(pyridoxal phosphate)lysine. T245 contributes to the pyridoxal 5'-phosphate binding site. C333 (cysteine persulfide intermediate) is an active-site residue. A [2Fe-2S] cluster-binding site is contributed by C333. A disordered region spans residues 392–419; sequence TPIQDEVRDDNRASSNSLNRGSAASKES. Residues 404 to 413 show a composition bias toward polar residues; sequence ASSNSLNRGS.

The protein belongs to the class-V pyridoxal-phosphate-dependent aminotransferase family. NifS/IscS subfamily. As to quaternary structure, homodimer. Pyridoxal 5'-phosphate is required as a cofactor.

The catalysed reaction is (sulfur carrier)-H + L-cysteine = (sulfur carrier)-SH + L-alanine. Functionally, catalyzes the removal of elemental sulfur atoms from cysteine to produce alanine. Seems to participate in the biosynthesis of the nitrogenase metalloclusters by providing the inorganic sulfur required for the Fe-S core formation. The chain is Cysteine desulfurase from Frankia sp. (strain EuIK1).